Reading from the N-terminus, the 349-residue chain is tRNA N6-adenosine threonylcarbamoyltransferase (349 aa).

Fe cation-binding residues include His-117 and His-121. Residues 140–144 (LVSGG), Asp-173, Gly-186, and Asn-284 each bind substrate. Asp-312 is a Fe cation binding site.

It belongs to the KAE1 / TsaD family. It depends on Fe(2+) as a cofactor.

It is found in the cytoplasm. It carries out the reaction L-threonylcarbamoyladenylate + adenosine(37) in tRNA = N(6)-L-threonylcarbamoyladenosine(37) in tRNA + AMP + H(+). Its function is as follows. Required for the formation of a threonylcarbamoyl group on adenosine at position 37 (t(6)A37) in tRNAs that read codons beginning with adenine. Is involved in the transfer of the threonylcarbamoyl moiety of threonylcarbamoyl-AMP (TC-AMP) to the N6 group of A37, together with TsaE and TsaB. TsaD likely plays a direct catalytic role in this reaction. The polypeptide is tRNA N6-adenosine threonylcarbamoyltransferase (Psychrobacter arcticus (strain DSM 17307 / VKM B-2377 / 273-4)).